The following is a 366-amino-acid chain: Ribosomal RNA large subunit methyltransferase M (366 aa).

S-adenosyl-L-methionine is bound by residues serine 188, 221–224 (CPGG), aspartate 240, aspartate 260, and aspartate 277. Lysine 306 functions as the Proton acceptor in the catalytic mechanism.

This sequence belongs to the class I-like SAM-binding methyltransferase superfamily. RNA methyltransferase RlmE family. RlmM subfamily. In terms of assembly, monomer.

It localises to the cytoplasm. The enzyme catalyses cytidine(2498) in 23S rRNA + S-adenosyl-L-methionine = 2'-O-methylcytidine(2498) in 23S rRNA + S-adenosyl-L-homocysteine + H(+). Functionally, catalyzes the 2'-O-methylation at nucleotide C2498 in 23S rRNA. This Pectobacterium carotovorum subsp. carotovorum (strain PC1) protein is Ribosomal RNA large subunit methyltransferase M.